A 184-amino-acid polypeptide reads, in one-letter code: ATP-dependent protease subunit HslV (184 aa).

Thr-2 is a catalytic residue. 3 residues coordinate Na(+): Gly-157, Cys-160, and Thr-163.

It belongs to the peptidase T1B family. HslV subfamily. As to quaternary structure, a double ring-shaped homohexamer of HslV is capped on each side by a ring-shaped HslU homohexamer. The assembly of the HslU/HslV complex is dependent on binding of ATP.

Its subcellular location is the cytoplasm. The enzyme catalyses ATP-dependent cleavage of peptide bonds with broad specificity.. Allosterically activated by HslU binding. Functionally, protease subunit of a proteasome-like degradation complex believed to be a general protein degrading machinery. The protein is ATP-dependent protease subunit HslV of Vibrio vulnificus (strain CMCP6).